Consider the following 93-residue polypeptide: Guanine nucleotide-binding protein subunit gamma (93 aa).

The tract at residues 1–22 (MPQYASRDVGDPSQIKKNKQSM) is disordered. Cys89 carries the S-palmitoyl cysteine lipid modification. A Cysteine methyl ester modification is found at Cys90. Cys90 carries S-farnesyl cysteine lipidation. The propeptide at 91-93 (VVM) is removed in mature form.

Belongs to the G protein gamma family. G proteins are composed of 3 units, alpha, beta and gamma.

Its subcellular location is the membrane. This Neurospora crassa (strain ATCC 24698 / 74-OR23-1A / CBS 708.71 / DSM 1257 / FGSC 987) protein is Guanine nucleotide-binding protein subunit gamma (gng-1).